Here is a 388-residue protein sequence, read N- to C-terminus: ATP phosphoribosyltransferase regulatory subunit (388 aa).

This sequence belongs to the class-II aminoacyl-tRNA synthetase family. HisZ subfamily. In terms of assembly, heteromultimer composed of HisG and HisZ subunits.

It is found in the cytoplasm. The protein operates within amino-acid biosynthesis; L-histidine biosynthesis; L-histidine from 5-phospho-alpha-D-ribose 1-diphosphate: step 1/9. Required for the first step of histidine biosynthesis. May allow the feedback regulation of ATP phosphoribosyltransferase activity by histidine. This chain is ATP phosphoribosyltransferase regulatory subunit, found in Acinetobacter baumannii (strain SDF).